The sequence spans 195 residues: Capsid protein (195 aa).

The disordered stretch occupies residues 148 to 195; that stretch reads NAPILSTLPETTVVRRRGRSPRRRTPSPRRRRSQSPRRRRSASPASQC. Residues 161–188 show a composition bias toward basic residues; sequence VRRRGRSPRRRTPSPRRRRSQSPRRRRS. Residues serine 167, serine 174, and serine 182 each carry the phosphoserine; by host modification. One copy of the 1; half-length repeat lies at 167–172; that stretch reads SPRRRT. The tract at residues 167-188 is 3 X 7 AA repeats of S-P-R-R-R-[PR]-S; the sequence is SPRRRTPSPRRRRSQSPRRRRS. A Bipartite nuclear localization signal motif is present at residues 170–187; the sequence is RRTPSPRRRRSQSPRRRR. 2 tandem repeats follow at residues 174–180 and 182–188. The interval 189–195 is RNA binding; that stretch reads ASPASQC.

It belongs to the orthohepadnavirus core antigen family. Homodimerizes, then multimerizes. Interacts with cytosol exposed regions of viral L glycoprotein present in the reticulum-to-Golgi compartment. Interacts with human FLNB. Phosphorylated form interacts with host importin alpha; this interaction depends on the exposure of the NLS, which itself depends upon genome maturation and/or phosphorylation of the capsid protein. Interacts with host NUP153. Phosphorylated by host SRPK1, SRPK2, and maybe protein kinase C or GAPDH. Phosphorylation is critical for pregenomic RNA packaging. Protein kinase C phosphorylation is stimulated by HBx protein and may play a role in transport of the viral genome to the nucleus at the late step during the viral replication cycle.

Its subcellular location is the virion. The protein localises to the host cytoplasm. In terms of biological role, self assembles to form an icosahedral capsid. Most capsids appear to be large particles with an icosahedral symmetry of T=4 and consist of 240 copies of capsid protein, though a fraction forms smaller T=3 particles consisting of 180 capsid proteins. Entering capsids are transported along microtubules to the nucleus. Phosphorylation of the capsid is thought to induce exposure of nuclear localization signal in the C-terminal portion of the capsid protein that allows binding to the nuclear pore complex via the importin (karyopherin-) alpha and beta. Capsids are imported in intact form through the nuclear pore into the nuclear basket, where it probably binds NUP153. Only capsids that contain the mature viral genome can release the viral DNA and capsid protein into the nucleoplasm. Immature capsids get stuck in the basket. Capsids encapsulate the pre-genomic RNA and the P protein. Pre-genomic RNA is reverse-transcribed into DNA while the capsid is still in the cytoplasm. The capsid can then either be directed to the nucleus, providing more genomes for transcription, or bud through the endoplasmic reticulum to provide new virions. The protein is Capsid protein of Hepatitis B virus genotype G (isolate IG29227/2000) (HBV-G).